The chain runs to 211 residues: Urease accessory protein UreF (211 aa).

A disordered region spans residues 71–93; the sequence is DDADRETDARTPAPAARHASRSQ.

This sequence belongs to the UreF family. In terms of assembly, ureD, UreF and UreG form a complex that acts as a GTP-hydrolysis-dependent molecular chaperone, activating the urease apoprotein by helping to assemble the nickel containing metallocenter of UreC. The UreE protein probably delivers the nickel.

It localises to the cytoplasm. In terms of biological role, required for maturation of urease via the functional incorporation of the urease nickel metallocenter. This is Urease accessory protein UreF from Mycobacterium tuberculosis (strain ATCC 25177 / H37Ra).